The sequence spans 331 residues: MALIDPFNRKIDYLRVSVTDKCNYRCGYCMPEQGAHPEGRHTEYLDYDELARIIKAFVDLGVTKVRITGGEPLVRKGLPGFIEEIQPYEGLEEIALSTNAHHLDKHAVALKKAGLSRANVSIDSLQPEKFNKITRGGNLEKVLAGVDAGLAAGLNPIKFNMVVMKGTNDDEIEAMVDYGIEKGVEVRFIETMPIGEAGISLMDQHYPMEKIMARVRAHVGTDLIPATGKSHDGPSKNFHIKGTDAKIGVISAVSQHFCESCNRVRLTARGVLALCLGQEDSVDLRTPIREGISDEALKQMIVDAMLKKPEKHFFNENVHNIEFRQMVSLGG.

Residues Pro6–Pro234 form the Radical SAM core domain. Residue Arg15 participates in GTP binding. Residues Cys22 and Cys26 each coordinate [4Fe-4S] cluster. Tyr28 serves as a coordination point for S-adenosyl-L-methionine. Cys29 contacts [4Fe-4S] cluster. A GTP-binding site is contributed by Arg66. S-adenosyl-L-methionine is bound at residue Gly70. Ser97 lines the GTP pocket. Ser121 contributes to the S-adenosyl-L-methionine binding site. Lys158 lines the GTP pocket. Met192 is an S-adenosyl-L-methionine binding site. [4Fe-4S] cluster-binding residues include Cys258 and Cys261. Arg263 to Arg265 is a binding site for GTP. Cys275 serves as a coordination point for [4Fe-4S] cluster.

The protein belongs to the radical SAM superfamily. MoaA family. In terms of assembly, monomer and homodimer. The cofactor is [4Fe-4S] cluster.

It catalyses the reaction GTP + AH2 + S-adenosyl-L-methionine = (8S)-3',8-cyclo-7,8-dihydroguanosine 5'-triphosphate + 5'-deoxyadenosine + L-methionine + A + H(+). It participates in cofactor biosynthesis; molybdopterin biosynthesis. Its function is as follows. Catalyzes the cyclization of GTP to (8S)-3',8-cyclo-7,8-dihydroguanosine 5'-triphosphate. This chain is GTP 3',8-cyclase, found in Hydrogenovibrio crunogenus (strain DSM 25203 / XCL-2) (Thiomicrospira crunogena).